A 251-amino-acid chain; its full sequence is Uridylate kinase (251 aa).

Residue 19-22 (KLSG) participates in ATP binding. Residue Gly61 coordinates UMP. ATP contacts are provided by Gly62 and Arg66. UMP contacts are provided by residues Asp81 and 142–149 (IGNPFFTT). Residues Thr169, Gln170, Tyr175, and Asp178 each coordinate ATP.

Belongs to the UMP kinase family. As to quaternary structure, homohexamer.

The protein resides in the cytoplasm. It carries out the reaction UMP + ATP = UDP + ADP. The protein operates within pyrimidine metabolism; CTP biosynthesis via de novo pathway; UDP from UMP (UMPK route): step 1/1. Its activity is regulated as follows. Inhibited by UTP. In terms of biological role, catalyzes the reversible phosphorylation of UMP to UDP. The polypeptide is Uridylate kinase (Hyphomonas neptunium (strain ATCC 15444)).